Consider the following 316-residue polypeptide: Beta-ketoacyl-[acyl-carrier-protein] synthase III (316 aa).

Catalysis depends on residues C112 and H243. The ACP-binding stretch occupies residues 244-248 (QANLR). N273 is an active-site residue.

The protein belongs to the thiolase-like superfamily. FabH family. In terms of assembly, homodimer.

The protein resides in the cytoplasm. It carries out the reaction malonyl-[ACP] + acetyl-CoA + H(+) = 3-oxobutanoyl-[ACP] + CO2 + CoA. It functions in the pathway lipid metabolism; fatty acid biosynthesis. Its function is as follows. Catalyzes the condensation reaction of fatty acid synthesis by the addition to an acyl acceptor of two carbons from malonyl-ACP. Catalyzes the first condensation reaction which initiates fatty acid synthesis and may therefore play a role in governing the total rate of fatty acid production. Possesses both acetoacetyl-ACP synthase and acetyl transacylase activities. Its substrate specificity determines the biosynthesis of branched-chain and/or straight-chain of fatty acids. This is Beta-ketoacyl-[acyl-carrier-protein] synthase III from Yersinia pestis (strain Pestoides F).